The chain runs to 742 residues: Photosystem I P700 chlorophyll a apoprotein A2 (742 aa).

A run of 8 helical transmembrane segments spans residues 46-69, 135-158, 175-199, 273-291, 336-359, 375-401, 423-445, and 525-543; these read LFSTHFGHLAIIALWVAGNLFHIA, LFQASIFMSILACWTLFAGWLHLQ, LNHHLAVLFGFSSIAWTGHLVHVAI, IAHHHIAIGTVFIIAGHMY, LHFQLGLALAALGVATSLVAQHMG, SALYTHHQYIAMFLMVGAFAHGAIFFV, ALISHLSWVTMILGFHTLGIYVH, and FLVHHAIALGLHTTALILI. Residues C567 and C576 each coordinate [4Fe-4S] cluster. The next 2 membrane-spanning stretches (helical) occupy residues 583 to 604 and 651 to 673; these read AMYLAMFWALNLIAWVTFYWHW and LSVWAWMFLFGHLVWATGFMFLI. Divinyl chlorophyll a contacts are provided by H662, M670, and Y678. A phylloquinone-binding site is contributed by W679. A helical transmembrane segment spans residues 715 to 735; it reads LVGLAHFTIGNILTFGAFVIA.

The protein belongs to the PsaA/PsaB family. The PsaA/B heterodimer binds the P700 divinyl chlorophyll special pair and subsequent electron acceptors. PSI consists of a core antenna complex that captures photons, and an electron transfer chain that converts photonic excitation into a charge separation. The cyanobacterial PSI reaction center is composed of one copy each of PsaA,B,C,D,E,F,I,J,K,L,M and X, and forms trimeric complexes. PSI electron transfer chain: 5 divinyl chlorophyll a, 1 divinyl chlorophyll a', 2 phylloquinones and 3 4Fe-4S clusters. PSI core antenna: 90 divinyl chlorophyll a, 22 carotenoids, 3 phospholipids and 1 galactolipid. P700 is a divinyl chlorophyll a/divinyl chlorophyll a' dimer, A0 is one or more divinyl chlorophyll a, A1 is one or both phylloquinones and FX is a shared 4Fe-4S iron-sulfur center. serves as cofactor.

The protein resides in the cellular thylakoid membrane. The enzyme catalyses reduced [plastocyanin] + hnu + oxidized [2Fe-2S]-[ferredoxin] = oxidized [plastocyanin] + reduced [2Fe-2S]-[ferredoxin]. Functionally, psaA and PsaB bind P700, the primary electron donor of photosystem I (PSI), as well as the electron acceptors A0, A1 and FX. PSI is a plastocyanin/cytochrome c6-ferredoxin oxidoreductase, converting photonic excitation into a charge separation, which transfers an electron from the donor P700 chlorophyll pair to the spectroscopically characterized acceptors A0, A1, FX, FA and FB in turn. Oxidized P700 is reduced on the lumenal side of the thylakoid membrane by plastocyanin or cytochrome c6. The sequence is that of Photosystem I P700 chlorophyll a apoprotein A2 from Prochlorococcus marinus subsp. pastoris (strain CCMP1986 / NIES-2087 / MED4).